Here is a 155-residue protein sequence, read N- to C-terminus: Endoribonuclease YbeY (155 aa).

Positions 118, 122, and 128 each coordinate Zn(2+).

This sequence belongs to the endoribonuclease YbeY family. It depends on Zn(2+) as a cofactor.

Its subcellular location is the cytoplasm. Its function is as follows. Single strand-specific metallo-endoribonuclease involved in late-stage 70S ribosome quality control and in maturation of the 3' terminus of the 16S rRNA. This chain is Endoribonuclease YbeY, found in Bordetella petrii (strain ATCC BAA-461 / DSM 12804 / CCUG 43448).